The sequence spans 323 residues: D-alanine--D-alanine ligase (323 aa).

The 199-residue stretch at 102–300 (KQIFRAEGIP…FTELVERMLQ (199 aa)) folds into the ATP-grasp domain. Residue 130–185 (VARLGSPLVVKPSNSGSTVGISLARDEVSLAQGLALASSVSSRVFLERYIPGKEIT) participates in ATP binding. Mg(2+) is bound by residues Asp-254, Glu-267, and Asn-269.

The protein belongs to the D-alanine--D-alanine ligase family. The cofactor is Mg(2+). It depends on Mn(2+) as a cofactor.

Its subcellular location is the cytoplasm. The catalysed reaction is 2 D-alanine + ATP = D-alanyl-D-alanine + ADP + phosphate + H(+). It participates in cell wall biogenesis; peptidoglycan biosynthesis. Its function is as follows. Cell wall formation. The polypeptide is D-alanine--D-alanine ligase (Synechococcus sp. (strain JA-3-3Ab) (Cyanobacteria bacterium Yellowstone A-Prime)).